A 120-amino-acid chain; its full sequence is Large ribosomal subunit protein eL8 (120 aa).

The protein belongs to the eukaryotic ribosomal protein eL8 family. As to quaternary structure, part of the 50S ribosomal subunit. Probably part of the RNase P complex.

The protein localises to the cytoplasm. Functionally, multifunctional RNA-binding protein that recognizes the K-turn motif in ribosomal RNA, the RNA component of RNase P, box H/ACA, box C/D and box C'/D' sRNAs. The sequence is that of Large ribosomal subunit protein eL8 from Haloquadratum walsbyi (strain DSM 16790 / HBSQ001).